We begin with the raw amino-acid sequence, 404 residues long: Formate-dependent phosphoribosylglycinamide formyltransferase (404 aa).

Residues 25–26 (EL) and glutamate 85 each bind N(1)-(5-phospho-beta-D-ribosyl)glycinamide. ATP is bound by residues arginine 118, lysine 159, 164-169 (SSGKGQ), 199-202 (EGFI), and glutamate 207. In terms of domain architecture, ATP-grasp spans 123–318 (RLAAEELGLP…EFELHARAIL (196 aa)). Positions 277 and 289 each coordinate Mg(2+). N(1)-(5-phospho-beta-D-ribosyl)glycinamide is bound by residues aspartate 296, lysine 365, and 372–373 (RR).

Belongs to the PurK/PurT family. Homodimer.

The enzyme catalyses N(1)-(5-phospho-beta-D-ribosyl)glycinamide + formate + ATP = N(2)-formyl-N(1)-(5-phospho-beta-D-ribosyl)glycinamide + ADP + phosphate + H(+). Its pathway is purine metabolism; IMP biosynthesis via de novo pathway; N(2)-formyl-N(1)-(5-phospho-D-ribosyl)glycinamide from N(1)-(5-phospho-D-ribosyl)glycinamide (formate route): step 1/1. Its function is as follows. Involved in the de novo purine biosynthesis. Catalyzes the transfer of formate to 5-phospho-ribosyl-glycinamide (GAR), producing 5-phospho-ribosyl-N-formylglycinamide (FGAR). Formate is provided by PurU via hydrolysis of 10-formyl-tetrahydrofolate. In Burkholderia pseudomallei (strain 1106a), this protein is Formate-dependent phosphoribosylglycinamide formyltransferase.